The sequence spans 430 residues: tRNA(Ile)-lysidine synthase (430 aa).

21–26 (SGGLDS) provides a ligand contact to ATP.

This sequence belongs to the tRNA(Ile)-lysidine synthase family.

The protein resides in the cytoplasm. The catalysed reaction is cytidine(34) in tRNA(Ile2) + L-lysine + ATP = lysidine(34) in tRNA(Ile2) + AMP + diphosphate + H(+). Its function is as follows. Ligates lysine onto the cytidine present at position 34 of the AUA codon-specific tRNA(Ile) that contains the anticodon CAU, in an ATP-dependent manner. Cytidine is converted to lysidine, thus changing the amino acid specificity of the tRNA from methionine to isoleucine. The protein is tRNA(Ile)-lysidine synthase of Salmonella agona (strain SL483).